We begin with the raw amino-acid sequence, 267 residues long: Putative N-acetylmuramoyl-L-alanine amidase RC0497 (267 aa).

The segment at 1–25 (MSKSKAIENNGISNTNSPNGKYMAP) is disordered. Residues 10 to 19 (NGISNTNSPN) are compositionally biased toward polar residues. The N-acetylmuramoyl-L-alanine amidase domain occupies 33-141 (TCVVITYSVS…NLDLKHDLVG (109 aa)).

It belongs to the N-acetylmuramoyl-L-alanine amidase 2 family.

Its subcellular location is the secreted. The enzyme catalyses Hydrolyzes the link between N-acetylmuramoyl residues and L-amino acid residues in certain cell-wall glycopeptides.. The sequence is that of Putative N-acetylmuramoyl-L-alanine amidase RC0497 from Rickettsia conorii (strain ATCC VR-613 / Malish 7).